A 315-amino-acid polypeptide reads, in one-letter code: UDP-3-O-acyl-N-acetylglucosamine deacetylase (315 aa).

Zn(2+)-binding residues include His78, His235, and Asp239. His262 functions as the Proton donor in the catalytic mechanism.

This sequence belongs to the LpxC family. Zn(2+) is required as a cofactor.

The catalysed reaction is a UDP-3-O-[(3R)-3-hydroxyacyl]-N-acetyl-alpha-D-glucosamine + H2O = a UDP-3-O-[(3R)-3-hydroxyacyl]-alpha-D-glucosamine + acetate. Its pathway is glycolipid biosynthesis; lipid IV(A) biosynthesis; lipid IV(A) from (3R)-3-hydroxytetradecanoyl-[acyl-carrier-protein] and UDP-N-acetyl-alpha-D-glucosamine: step 2/6. In terms of biological role, catalyzes the hydrolysis of UDP-3-O-myristoyl-N-acetylglucosamine to form UDP-3-O-myristoylglucosamine and acetate, the committed step in lipid A biosynthesis. The chain is UDP-3-O-acyl-N-acetylglucosamine deacetylase from Syntrophus aciditrophicus (strain SB).